Consider the following 98-residue polypeptide: Co-chaperonin GroES (98 aa).

Belongs to the GroES chaperonin family. Heptamer of 7 subunits arranged in a ring. Interacts with the chaperonin GroEL.

The protein resides in the cytoplasm. In terms of biological role, together with the chaperonin GroEL, plays an essential role in assisting protein folding. The GroEL-GroES system forms a nano-cage that allows encapsulation of the non-native substrate proteins and provides a physical environment optimized to promote and accelerate protein folding. GroES binds to the apical surface of the GroEL ring, thereby capping the opening of the GroEL channel. This chain is Co-chaperonin GroES, found in Neorickettsia sennetsu (strain ATCC VR-367 / Miyayama) (Ehrlichia sennetsu).